We begin with the raw amino-acid sequence, 98 residues long: UPF0251 protein SO_0727 (98 aa).

It belongs to the UPF0251 family.

The polypeptide is UPF0251 protein SO_0727 (Shewanella oneidensis (strain ATCC 700550 / JCM 31522 / CIP 106686 / LMG 19005 / NCIMB 14063 / MR-1)).